A 355-amino-acid chain; its full sequence is UDP-N-acetylglucosamine--N-acetylmuramyl-(pentapeptide) pyrophosphoryl-undecaprenol N-acetylglucosamine transferase (355 aa).

UDP-N-acetyl-alpha-D-glucosamine-binding positions include 14-16 (TGG), Asn-126, Arg-162, Ser-190, Ile-243, 262-267 (ALTVSE), and Gln-287.

Belongs to the glycosyltransferase 28 family. MurG subfamily.

The protein resides in the cell inner membrane. It catalyses the reaction di-trans,octa-cis-undecaprenyl diphospho-N-acetyl-alpha-D-muramoyl-L-alanyl-D-glutamyl-meso-2,6-diaminopimeloyl-D-alanyl-D-alanine + UDP-N-acetyl-alpha-D-glucosamine = di-trans,octa-cis-undecaprenyl diphospho-[N-acetyl-alpha-D-glucosaminyl-(1-&gt;4)]-N-acetyl-alpha-D-muramoyl-L-alanyl-D-glutamyl-meso-2,6-diaminopimeloyl-D-alanyl-D-alanine + UDP + H(+). The protein operates within cell wall biogenesis; peptidoglycan biosynthesis. In terms of biological role, cell wall formation. Catalyzes the transfer of a GlcNAc subunit on undecaprenyl-pyrophosphoryl-MurNAc-pentapeptide (lipid intermediate I) to form undecaprenyl-pyrophosphoryl-MurNAc-(pentapeptide)GlcNAc (lipid intermediate II). This is UDP-N-acetylglucosamine--N-acetylmuramyl-(pentapeptide) pyrophosphoryl-undecaprenol N-acetylglucosamine transferase from Vibrio parahaemolyticus serotype O3:K6 (strain RIMD 2210633).